The sequence spans 258 residues: Peroxisomal membrane protein 11B (258 aa).

Lysine 43 is subject to N6-acetyllysine. The interaction with PEX19, PEX11G and FIS1 and peroxisome targeting stretch occupies residues valine 210–proline 258. The chain crosses the membrane as a helical span at residues glycine 232–leucine 254.

This sequence belongs to the peroxin-11 family. In terms of assembly, homodimer. Heterodimer with PEX11G. Interacts with PEX19. Interacts with FIS1.

It is found in the peroxisome membrane. Functionally, involved in peroxisomal proliferation. May regulate peroxisome division by recruiting the dynamin-related GTPase DNM1L to the peroxisomal membrane. Promotes membrane protrusion and elongation on the peroxisomal surface. The protein is Peroxisomal membrane protein 11B (PEX11B) of Bos taurus (Bovine).